A 299-amino-acid polypeptide reads, in one-letter code: Bifunctional protein FolD 2 (299 aa).

Belongs to the tetrahydrofolate dehydrogenase/cyclohydrolase family. Homodimer.

The catalysed reaction is (6R)-5,10-methylene-5,6,7,8-tetrahydrofolate + NADP(+) = (6R)-5,10-methenyltetrahydrofolate + NADPH. It carries out the reaction (6R)-5,10-methenyltetrahydrofolate + H2O = (6R)-10-formyltetrahydrofolate + H(+). It participates in one-carbon metabolism; tetrahydrofolate interconversion. Its function is as follows. Catalyzes the oxidation of 5,10-methylenetetrahydrofolate to 5,10-methenyltetrahydrofolate and then the hydrolysis of 5,10-methenyltetrahydrofolate to 10-formyltetrahydrofolate. The chain is Bifunctional protein FolD 2 (FOLD2) from Arabidopsis thaliana (Mouse-ear cress).